Consider the following 103-residue polypeptide: Large ribosomal subunit protein bL21 (103 aa).

This sequence belongs to the bacterial ribosomal protein bL21 family. Part of the 50S ribosomal subunit. Contacts protein L20.

Functionally, this protein binds to 23S rRNA in the presence of protein L20. This chain is Large ribosomal subunit protein bL21, found in Cupriavidus necator (strain ATCC 17699 / DSM 428 / KCTC 22496 / NCIMB 10442 / H16 / Stanier 337) (Ralstonia eutropha).